The following is a 391-amino-acid chain: ATP phosphoribosyltransferase regulatory subunit (391 aa).

Belongs to the class-II aminoacyl-tRNA synthetase family. HisZ subfamily. As to quaternary structure, heteromultimer composed of HisG and HisZ subunits.

It localises to the cytoplasm. It participates in amino-acid biosynthesis; L-histidine biosynthesis; L-histidine from 5-phospho-alpha-D-ribose 1-diphosphate: step 1/9. In terms of biological role, required for the first step of histidine biosynthesis. May allow the feedback regulation of ATP phosphoribosyltransferase activity by histidine. The polypeptide is ATP phosphoribosyltransferase regulatory subunit (Prochlorococcus marinus (strain SARG / CCMP1375 / SS120)).